A 161-amino-acid chain; its full sequence is Nucleotide-binding protein Gmet_3206 (161 aa).

Belongs to the YajQ family.

In terms of biological role, nucleotide-binding protein. The protein is Nucleotide-binding protein Gmet_3206 of Geobacter metallireducens (strain ATCC 53774 / DSM 7210 / GS-15).